A 530-amino-acid polypeptide reads, in one-letter code: GMP synthase [glutamine-hydrolyzing] (530 aa).

In terms of domain architecture, Glutamine amidotransferase type-1 spans 4–205 (RILILDYGSQ…VKDICGCEGD (202 aa)). C84 (nucleophile) is an active-site residue. Catalysis depends on residues H179 and E181. Positions 206 to 398 (WNMPDYISEA…LGLPPQMVYR (193 aa)) constitute a GMPS ATP-PPase domain. 233–239 (SGGVDSS) provides a ligand contact to ATP.

In terms of assembly, homodimer.

It carries out the reaction XMP + L-glutamine + ATP + H2O = GMP + L-glutamate + AMP + diphosphate + 2 H(+). Its pathway is purine metabolism; GMP biosynthesis; GMP from XMP (L-Gln route): step 1/1. Catalyzes the synthesis of GMP from XMP. The protein is GMP synthase [glutamine-hydrolyzing] of Bordetella bronchiseptica (strain ATCC BAA-588 / NCTC 13252 / RB50) (Alcaligenes bronchisepticus).